We begin with the raw amino-acid sequence, 261 residues long: tRNA threonylcarbamoyladenosine dehydratase (261 aa).

The chain crosses the membrane as a helical span at residues 230–250 (CANGFGAATMITATFGFFAVS).

Belongs to the HesA/MoeB/ThiF family.

Its subcellular location is the membrane. Functionally, catalyzes the ATP-dependent dehydration of threonylcarbamoyladenosine at position 37 (t(6)A37) to form cyclic t(6)A37 (ct(6)A37) in tRNAs that read codons beginning with adenine. The protein is tRNA threonylcarbamoyladenosine dehydratase (tcdA) of Haemophilus influenzae (strain ATCC 51907 / DSM 11121 / KW20 / Rd).